Reading from the N-terminus, the 89-residue chain is UPF0223 protein BCB4264_A4064 (89 aa).

This sequence belongs to the UPF0223 family.

This chain is UPF0223 protein BCB4264_A4064, found in Bacillus cereus (strain B4264).